The following is a 298-amino-acid chain: ATP synthase F(1) complex subunit gamma, mitochondrial (298 aa).

The transit peptide at 1 to 25 (MFSRAGVAGLSAWTLQPQWIQVRNM) directs the protein to the mitochondrion. Residue Lys39 is modified to N6-acetyllysine. Lys49 is subject to N6-succinyllysine. Lys55 carries the post-translational modification N6-acetyllysine. An N6-acetyllysine; alternate modification is found at Lys115. Position 115 is an N6-succinyllysine; alternate (Lys115). Phosphoserine is present on Ser146. Lys154 is subject to N6-acetyllysine; alternate. Residue Lys154 is modified to N6-succinyllysine; alternate. At Lys197 the chain carries N6-acetyllysine. At Lys270 the chain carries N6-succinyllysine.

The protein belongs to the ATPase gamma chain family. In terms of assembly, component of the ATP synthase complex composed at least of ATP5F1A/subunit alpha, ATP5F1B/subunit beta, ATP5MC1/subunit c (homooctomer), MT-ATP6/subunit a, MT-ATP8/subunit 8, ATP5ME/subunit e, ATP5MF/subunit f, ATP5MG/subunit g, ATP5MK/subunit k, ATP5MJ/subunit j, ATP5F1C/subunit gamma, ATP5F1D/subunit delta, ATP5F1E/subunit epsilon, ATP5PF/subunit F6, ATP5PB/subunit b, ATP5PD/subunit d, ATP5PO/subunit OSCP. ATP synthase complex consists of a soluble F(1) head domain (subunits alpha(3) and beta(3)) - the catalytic core - and a membrane F(0) domain - the membrane proton channel (subunits c, a, 8, e, f, g, k and j). These two domains are linked by a central stalk (subunits gamma, delta, and epsilon) rotating inside the F1 region and a stationary peripheral stalk (subunits F6, b, d, and OSCP). Interacts with FLVCR2; this interaction occurs in the absence of heme and is disrupted upon heme binding.

The protein resides in the mitochondrion inner membrane. Subunit gamma, of the mitochondrial membrane ATP synthase complex (F(1)F(0) ATP synthase or Complex V) that produces ATP from ADP in the presence of a proton gradient across the membrane which is generated by electron transport complexes of the respiratory chain. ATP synthase complex consist of a soluble F(1) head domain - the catalytic core - and a membrane F(1) domain - the membrane proton channel. These two domains are linked by a central stalk rotating inside the F(1) region and a stationary peripheral stalk. During catalysis, ATP synthesis in the catalytic domain of F(1) is coupled via a rotary mechanism of the central stalk subunits to proton translocation. In vivo, can only synthesize ATP although its ATP hydrolase activity can be activated artificially in vitro. With the central stalk subunit delta, is essential for the biogenesis of F(1) catalytic part of the ATP synthase complex namely in the formation of F1 assembly intermediate. The protein is ATP synthase F(1) complex subunit gamma, mitochondrial of Macaca fascicularis (Crab-eating macaque).